Reading from the N-terminus, the 505-residue chain is Glycerol kinase (505 aa).

T14 is a binding site for ADP. The ATP site is built by T14, T15, and S16. T14 is a binding site for sn-glycerol 3-phosphate. R18 contacts ADP. Sn-glycerol 3-phosphate-binding residues include R84, E85, Y136, and D246. Glycerol-binding residues include R84, E85, Y136, D246, and Q247. ADP contacts are provided by T268 and G311. ATP is bound by residues T268, G311, Q315, and G412. ADP is bound by residues G412 and N416.

It belongs to the FGGY kinase family.

It carries out the reaction glycerol + ATP = sn-glycerol 3-phosphate + ADP + H(+). It participates in polyol metabolism; glycerol degradation via glycerol kinase pathway; sn-glycerol 3-phosphate from glycerol: step 1/1. Its activity is regulated as follows. Inhibited by fructose 1,6-bisphosphate (FBP). Key enzyme in the regulation of glycerol uptake and metabolism. Catalyzes the phosphorylation of glycerol to yield sn-glycerol 3-phosphate. This Vibrio parahaemolyticus serotype O3:K6 (strain RIMD 2210633) protein is Glycerol kinase.